The primary structure comprises 589 residues: NADPH-dependent diflavin oxidoreductase 1 (589 aa).

In terms of domain architecture, Flavodoxin-like spans 5 to 151 (ITILYGSETG…YYIEWEAELI (147 aa)). FMN is bound by residues 11–16 (SETGNA), 60–63 (STTG), 98–107 (VGDSSYVKYN), and Glu133. The FAD-binding FR-type domain maps to 202–439 (DGLKLGTVLE…SIQRSSFKYK (238 aa)). FAD-binding positions include Arg349, 380-383 (RMFS), and 412-415 (GVCT). NADP(+) is bound by residues Thr452 and 507-508 (SR). Trp589 lines the FAD pocket.

This sequence belongs to the NADPH-dependent diflavin oxidoreductase NDOR1 family. It in the N-terminal section; belongs to the flavodoxin family. The protein in the C-terminal section; belongs to the flavoprotein pyridine nucleotide cytochrome reductase family. In terms of assembly, interacts with DRE2; as part of the cytosolic iron-sulfur (Fe-S) protein assembly (CIA) machinery. FAD serves as cofactor. FMN is required as a cofactor.

It is found in the cytoplasm. It localises to the mitochondrion. The catalysed reaction is 2 oxidized [2Fe-2S]-[protein] + NADPH = 2 reduced [2Fe-2S]-[protein] + NADP(+) + H(+). Its function is as follows. NADPH-dependent reductase which is a central component of the cytosolic iron-sulfur (Fe-S) protein assembly (CIA) machinery. Transfers electrons from NADPH via its FAD and FMN prosthetic groups to the [2Fe-2S] cluster of DRE2, another key component of the CIA machinery. In turn, this reduced cluster provides electrons for assembly of cytosolic iron-sulfur cluster proteins. Positively controls H(2)O(2)-induced cell death. This chain is NADPH-dependent diflavin oxidoreductase 1, found in Candida albicans (strain SC5314 / ATCC MYA-2876) (Yeast).